The following is a 350-amino-acid chain: Nicotinate-nucleotide--dimethylbenzimidazole phosphoribosyltransferase (350 aa).

Residue E317 is the Proton acceptor of the active site.

The protein belongs to the CobT family.

It catalyses the reaction 5,6-dimethylbenzimidazole + nicotinate beta-D-ribonucleotide = alpha-ribazole 5'-phosphate + nicotinate + H(+). It participates in nucleoside biosynthesis; alpha-ribazole biosynthesis; alpha-ribazole from 5,6-dimethylbenzimidazole: step 1/2. In terms of biological role, catalyzes the synthesis of alpha-ribazole-5'-phosphate from nicotinate mononucleotide (NAMN) and 5,6-dimethylbenzimidazole (DMB). The chain is Nicotinate-nucleotide--dimethylbenzimidazole phosphoribosyltransferase from Shewanella sp. (strain MR-4).